The chain runs to 1158 residues: ATP-dependent helicase/deoxyribonuclease subunit B (1158 aa).

This sequence belongs to the helicase family. AddB/RexB type 2 subfamily. Heterodimer of AddA and RexB. Mg(2+) is required as a cofactor.

The heterodimer acts as both an ATP-dependent DNA helicase and an ATP-dependent, dual-direction single-stranded exonuclease. Recognizes the chi site generating a DNA molecule suitable for the initiation of homologous recombination. This subunit has 5' -&gt; 3' nuclease activity but not helicase activity. In Lactobacillus johnsonii (strain CNCM I-12250 / La1 / NCC 533), this protein is ATP-dependent helicase/deoxyribonuclease subunit B.